Consider the following 510-residue polypeptide: 1,3-beta-glucanosyltransferase gas5 (510 aa).

The N-terminal stretch at 1–22 is a signal peptide; that stretch reads MNFLHFLTTSLLLLGGSRLALA. A disulfide bridge links Cys70 with Cys99. Tyr88 is a (1,3-beta-D-glucosyl)n binding site. An N-linked (GlcNAc...) asparagine glycan is attached at Asn147. Residues Asn158, Glu159, Asp200, and Arg205 each coordinate (1,3-beta-D-glucosyl)n. Glu159 acts as the Proton donor in catalysis. Disulfide bonds link Cys214–Cys353 and Cys232–Cys264. N-linked (GlcNAc...) asparagine glycans are attached at residues Asn216 and Asn252. Glu261 acts as the Nucleophile in catalysis. Tyr300 contributes to the (1,3-beta-D-glucosyl)n binding site. Residues Asn318, Asn337, and Asn397 are each glycosylated (N-linked (GlcNAc...) asparagine). The disordered stretch occupies residues 424–456; that stretch reads QSSTSGSSSGSSSASTTASSSSVSSGSSISSGS. A lipid anchor (GPI-anchor amidated serine) is attached at Ser485. A propeptide spans 486–510 (removed in mature form); sequence SASTFNLSRFYVFAGILAISGLVFA. Asn491 carries N-linked (GlcNAc...) asparagine glycosylation.

Belongs to the glycosyl hydrolase 72 family. The GPI-anchor is attached to the protein in the endoplasmic reticulum and serves to target the protein to the cell surface. There, the glucosamine-inositol phospholipid moiety is cleaved off and the GPI-modified mannoprotein is covalently attached via its lipidless GPI glycan remnant to the 1,6-beta-glucan of the outer cell wall layer.

It is found in the secreted. It localises to the cell wall. Its subcellular location is the membrane. Functionally, splits internally a 1,3-beta-glucan molecule and transfers the newly generated reducing end (the donor) to the non-reducing end of another 1,3-beta-glucan molecule (the acceptor) forming a 1,3-beta linkage, resulting in the elongation of 1,3-beta-glucan chains in the cell wall. In Schizosaccharomyces pombe (strain 972 / ATCC 24843) (Fission yeast), this protein is 1,3-beta-glucanosyltransferase gas5 (gas5).